Here is a 280-residue protein sequence, read N- to C-terminus: MGISLENVSYTYQSGTPFERRALFDMTVTIKDGSYTAFIGHTGSGKSTIMQLLNGLYLPTSGQVKVDDTIINSQSKNKEIKPIRKKVGLVFQFPESQLFAETVLEDIAFGPQNFGVSKEEAEQRALESLRLVGLSDELRDQNPFDLSGGQMRRVAIAGILAMQPDILVLDEPTAGLDPQGRKELMSLFKQLHLSGITIVLVTHLMDDVADYATAVNVMEKGRLVLSGTPKDVFQKVAFLKEKQLGVPKITEFALQLQEKGYSFESLPITIEEFVEVLVHG.

The 243-residue stretch at 3-245 (ISLENVSYTY…VAFLKEKQLG (243 aa)) folds into the ABC transporter domain. Residue 40 to 47 (GHTGSGKS) coordinates ATP.

This sequence belongs to the ABC transporter superfamily. Energy-coupling factor EcfA family. Forms a stable energy-coupling factor (ECF) transporter complex composed of 2 membrane-embedded substrate-binding proteins (S component), 2 ATP-binding proteins (A component) and 2 transmembrane proteins (T component).

The protein localises to the cell membrane. Its function is as follows. ATP-binding (A) component of a common energy-coupling factor (ECF) ABC-transporter complex. Unlike classic ABC transporters this ECF transporter provides the energy necessary to transport a number of different substrates. This Streptococcus thermophilus (strain CNRZ 1066) protein is Energy-coupling factor transporter ATP-binding protein EcfA2.